Reading from the N-terminus, the 299-residue chain is UDP-N-acetylenolpyruvoylglucosamine reductase (299 aa).

The 162-residue stretch at 31–192 (VGGVAEVVFK…VDATFVGACG (162 aa)) folds into the FAD-binding PCMH-type domain. The active site involves arginine 172. Serine 221 functions as the Proton donor in the catalytic mechanism. Glutamate 291 is an active-site residue.

It belongs to the MurB family. Requires FAD as cofactor.

The protein localises to the cytoplasm. The catalysed reaction is UDP-N-acetyl-alpha-D-muramate + NADP(+) = UDP-N-acetyl-3-O-(1-carboxyvinyl)-alpha-D-glucosamine + NADPH + H(+). The protein operates within cell wall biogenesis; peptidoglycan biosynthesis. Functionally, cell wall formation. The chain is UDP-N-acetylenolpyruvoylglucosamine reductase from Anaplasma marginale (strain St. Maries).